Reading from the N-terminus, the 205-residue chain is Large ribosomal subunit protein uL18 (205 aa).

Belongs to the universal ribosomal protein uL18 family. In terms of assembly, part of the 50S ribosomal subunit. Contacts the 5S and 23S rRNAs.

This is one of the proteins that bind and probably mediate the attachment of the 5S RNA into the large ribosomal subunit, where it forms part of the central protuberance. The polypeptide is Large ribosomal subunit protein uL18 (Haloquadratum walsbyi (strain DSM 16790 / HBSQ001)).